The chain runs to 1634 residues: DNA polymerase (1634 aa).

DOD-type homing endonuclease domains are found at residues 552–693 (LIGI…RLGI) and 1163–1295 (FLGF…LVGI).

This sequence belongs to the DNA polymerase type-B family. This protein undergoes a protein self splicing that involves a post-translational excision of the intervening region (intein) followed by peptide ligation.

It catalyses the reaction DNA(n) + a 2'-deoxyribonucleoside 5'-triphosphate = DNA(n+1) + diphosphate. This chain is DNA polymerase (pol), found in Methanocaldococcus jannaschii (strain ATCC 43067 / DSM 2661 / JAL-1 / JCM 10045 / NBRC 100440) (Methanococcus jannaschii).